We begin with the raw amino-acid sequence, 259 residues long: Global transcriptional regulator CodY (259 aa).

The interval 1–155 (MTLLEKTRKI…GGTVVGMEIL (155 aa)) is GAF domain. Positions 203–222 (ASKIADRVGITRSVIVNALR) form a DNA-binding region, H-T-H motif.

It belongs to the CodY family.

The protein resides in the cytoplasm. Functionally, DNA-binding global transcriptional regulator which is involved in the adaptive response to starvation and acts by directly or indirectly controlling the expression of numerous genes in response to nutrient availability. During rapid exponential growth, CodY is highly active and represses genes whose products allow adaptation to nutrient depletion. The protein is Global transcriptional regulator CodY of Listeria monocytogenes serotype 4b (strain CLIP80459).